We begin with the raw amino-acid sequence, 588 residues long: Cation channel sperm-associated protein 2 (588 aa).

Residues 1-106 lie on the Cytoplasmic side of the membrane; that stretch reads MAQEQGHFQL…LWAGWVLDSS (106 aa). The helical transmembrane segment at 107-129 threads the bilayer; sequence VFSKFIISLIFLNTFVLMVEIEL. The Extracellular segment spans residues 130–138; sequence MESTNTALW. A helical transmembrane segment spans residues 139-164; sequence PVKLALEVADWFILLSFIVEILLMWL. Topologically, residues 165-173 are cytoplasmic; the sequence is ASFSLFWKD. Residues 174–198 traverse the membrane as a helical segment; sequence AWNVFDFFVTLLSLLPELVVLLGVP. At 199–201 the chain is on the extracellular side; the sequence is AHS. Residues 202-220 traverse the membrane as a helical segment; that stretch reads VWLQLLRVCRVLRSLKLFA. At 221–237 the chain is on the cytoplasmic side; that stretch reads RFRQIKVILLALVRALK. Residues 238 to 260 form a helical membrane-spanning segment; the sequence is SMTFLLMLLLIFFYIFAVTGVYF. Topologically, residues 261–279 are extracellular; sequence FREYSRSTIEGLEYNMFFS. The helical; Pore-forming intramembrane region spans 280–292; that stretch reads DLLNSLVTVFILF. Residues 293–312 are Extracellular-facing; it reads TLDHWYAVLQDIWKVPESSR. Residues 313-339 form a helical membrane-spanning segment; that stretch reads VFSSIYVILWLLLGSIIFRNIIVAMMV. Residues 340–588 lie on the Cytoplasmic side of the membrane; it reads TNFQNIRSEL…VQALMSFEDK (249 aa). A disordered region spans residues 376 to 512; sequence SESLRGTSLG…YPVSHSISSH (137 aa). The span at 390-439 shows a compositional bias: acidic residues; the sequence is DIIETSDASDDDDDDDDDDDDDDDDDDDKSDATESDNEESDSENSESENS. The segment covering 440 to 502 has biased composition (basic and acidic residues); that stretch reads ESEKIDPEKD…KVKEESKEKA (63 aa).

The protein belongs to the cation channel sperm-associated (TC 1.A.1.19) family. In terms of assembly, component of the CatSper complex or CatSpermasome composed of the core pore-forming members CATSPER1, CATSPER2, CATSPER3 and CATSPER4 as well as auxiliary members CATSPERB, CATSPERG2, CATSPERD, CATSPERE, CATSPERZ, C2CD6/CATSPERT, SLCO6C1, TMEM249, TMEM262 and EFCAB9. HSPA1 may be an additional auxiliary complex member. The core complex members CATSPER1, CATSPER2, CATSPER3 and CATSPER4 form a heterotetrameric channel. The auxiliary CATSPERB, CATSPERG2, CATSPERD and CATSPERE subunits form a pavilion-like structure over the pore which stabilizes the complex through interactions with CATSPER4, CATSPER3, CATSPER1 and CATSPER2 respectively. SLCO6C1 interacts with CATSPERE and TMEM262/CATSPERH interacts with CATSPERB, further stabilizing the complex. C2CD6/CATSPERT interacts at least with CATSPERD and is required for targeting the CatSper complex in the flagellar membrane. Interacts with Ca(v)3.3/CACNA1I, leading to suppression of T-type calcium channel activity. In terms of tissue distribution, testis-specific.

It is found in the cell projection. The protein resides in the cilium. Its subcellular location is the flagellum membrane. It catalyses the reaction Ca(2+)(in) = Ca(2+)(out). With respect to regulation, in contrast to the human ortholog, not activated by progesterone. Activated by intracellular alkalinization. Functionally, pore-forming subunit of the CatSper complex, a sperm-specific voltage-gated calcium channel that plays a central role in sperm cell hyperactivation. Controls calcium entry to mediate the hyperactivated motility, a step needed for sperm motility which is essential late in the preparation of sperm for fertilization. The protein is Cation channel sperm-associated protein 2 (Catsper2) of Mus musculus (Mouse).